A 402-amino-acid chain; its full sequence is CCA-adding enzyme (402 aa).

ATP is bound by residues Gly-32 and Arg-35. Residues Gly-32 and Arg-35 each coordinate CTP. Asp-45 and Asp-47 together coordinate Mg(2+). Arg-119, Asp-162, Arg-165, Arg-168, and Arg-171 together coordinate ATP. Residues Arg-119, Asp-162, Arg-165, Arg-168, and Arg-171 each contribute to the CTP site.

This sequence belongs to the tRNA nucleotidyltransferase/poly(A) polymerase family. Bacterial CCA-adding enzyme type 3 subfamily. As to quaternary structure, homodimer. Requires Mg(2+) as cofactor.

The enzyme catalyses a tRNA precursor + 2 CTP + ATP = a tRNA with a 3' CCA end + 3 diphosphate. It catalyses the reaction a tRNA with a 3' CCA end + 2 CTP + ATP = a tRNA with a 3' CCACCA end + 3 diphosphate. Its function is as follows. Catalyzes the addition and repair of the essential 3'-terminal CCA sequence in tRNAs without using a nucleic acid template. Adds these three nucleotides in the order of C, C, and A to the tRNA nucleotide-73, using CTP and ATP as substrates and producing inorganic pyrophosphate. tRNA 3'-terminal CCA addition is required both for tRNA processing and repair. Also involved in tRNA surveillance by mediating tandem CCA addition to generate a CCACCA at the 3' terminus of unstable tRNAs. While stable tRNAs receive only 3'-terminal CCA, unstable tRNAs are marked with CCACCA and rapidly degraded. The polypeptide is CCA-adding enzyme (Lactococcus lactis subsp. cremoris (strain SK11)).